The sequence spans 578 residues: MHSVETFNLPALNSLLETTARRFGNRLAVQDDNGSLTFADFVEKVGILSAKLRLVIKRGEHVAVQLPRGINYIVAAYAIWEAGGVYLPLDNQWPSSRIEGILHRSHVRVLIHTSQADQGLELTELPAETRAESPVAGTPAYIIHTSGTTGEPKGVVVSHESLIHLVESHQRDIYQAYDVTEGPVAINASFCFDSALERMALVALGYSLHVVSDQVRKSPYELVKYLRDNSIVNVDLVPSHLKVLLSAGLNEKCDALRLVIVGGEAIDAELWREIVQNQAIYINVYGPTENTINTSFCEIRGETPHIGRPFKNVTCLLLNENGERCAAGEEGELLVAGRHLAQGYYNAPDLTDRVFVHIDGIRYYRTGDRVRQNEQGNLLYLGRIDDQVKINGFRIELADVQHNLTQLPGVKYAAVTPIKLPTGQGLLASIVWNSDAPEQTFSNLEALLGEKLPSYMVPTRWQKLDALPLTDNLKLDHKSLLSHWKNSQEQIGEKFAAESISATEHQIKNLWQKILRQPSLSPDAHFFASGGDSMAAMTLLVELKKVTPQDVSLGDIFKYPTIRKMAAWLDASSVQAES.

Residues 498–573 (ESISATEHQI…KMAAWLDASS (76 aa)) enclose the Carrier domain. Residue Ser533 is modified to O-(pantetheine 4'-phosphoryl)serine.

The protein belongs to the ATP-dependent AMP-binding enzyme family. Pantetheine 4'-phosphate serves as cofactor.

The protein operates within antibiotic biosynthesis. Functionally, involved in dapdiamide antibiotics biosynthesis. Activates and sequesters N-beta-fumaramoyl-DAP as a covalently tethered thioester for subsequent oxidative modification of the fumaramoyl group. This Enterobacter agglomerans (Erwinia herbicola) protein is Dapdiamide synthesis protein DdaD.